Reading from the N-terminus, the 96-residue chain is Glycine-rich protein DC7.1 (96 aa).

Positions 1–25 (MGSKIFLLLGLSIAFALLISSEVAA) are cleaved as a signal peptide. Positions 29 to 66 (SETTTEGASLDGGHHGGGGGGHYSGGGGHGGSHHGGGG) are disordered. A run of 2 repeats spans residues 42–50 (HHGGGGGGH) and 61–67 (HHGGGGH). The interval 42-67 (HHGGGGGGHYSGGGGHGGSHHGGGGH) is 2 approximate repeats of H-H-G(4,6)-H. The segment covering 43 to 66 (HGGGGGGHYSGGGGHGGSHHGGGG) has biased composition (gly residues).

This sequence belongs to the GRP family.

In terms of biological role, may be connected with the initiation of embryogenesis or with the metabolic changes produced by the removal of auxins. The polypeptide is Glycine-rich protein DC7.1 (Daucus carota (Wild carrot)).